The following is a 552-amino-acid chain: T-box transcription factor TBX4 (552 aa).

Basic and acidic residues predominate over residues 1-14; it reads MLQDKGLSESEEAF. The interval 1 to 50 is disordered; it reads MLQDKGLSESEEAFRAPGPALGEASNTSTTNAPEPALATPGLSGAALSSP. The segment at residues 76 to 256 is a DNA-binding region (T-box); the sequence is LHEKELWKKF…NNPFAKGFRG (181 aa). Residue serine 514 is modified to Phosphoserine.

It is found in the nucleus. Transcriptional regulator that has an essential role in the organogenesis of lungs, pelvis, and hindlimbs. In Mus musculus (Mouse), this protein is T-box transcription factor TBX4 (Tbx4).